The primary structure comprises 633 residues: Phosphomethylpyrimidine synthase (633 aa).

Substrate-binding positions include Asn-245, Met-274, Tyr-303, His-339, 359–361 (SRG), 400–403 (DGLR), and Glu-439. His-443 provides a ligand contact to Zn(2+). Tyr-466 is a substrate binding site. A Zn(2+)-binding site is contributed by His-507. [4Fe-4S] cluster contacts are provided by Cys-587, Cys-590, and Cys-595.

It belongs to the ThiC family. Homodimer. The cofactor is [4Fe-4S] cluster.

The catalysed reaction is 5-amino-1-(5-phospho-beta-D-ribosyl)imidazole + S-adenosyl-L-methionine = 4-amino-2-methyl-5-(phosphooxymethyl)pyrimidine + CO + 5'-deoxyadenosine + formate + L-methionine + 3 H(+). It participates in cofactor biosynthesis; thiamine diphosphate biosynthesis. In terms of biological role, catalyzes the synthesis of the hydroxymethylpyrimidine phosphate (HMP-P) moiety of thiamine from aminoimidazole ribotide (AIR) in a radical S-adenosyl-L-methionine (SAM)-dependent reaction. The chain is Phosphomethylpyrimidine synthase from Neisseria gonorrhoeae (strain ATCC 700825 / FA 1090).